The primary structure comprises 123 residues: Large ribosomal subunit protein uL29 (123 aa).

Belongs to the universal ribosomal protein uL29 family.

The protein is Large ribosomal subunit protein uL29 (RPL35) of Theileria parva (East coast fever infection agent).